A 1238-amino-acid polypeptide reads, in one-letter code: DNA-directed RNA polymerase subunit beta (1238 aa).

Positions 1186–1238 (IEGREDTPPEEVYEEGYEEGFEEESEELPEDIDFEPDSFDIENDDLDLEDFDI) are disordered. A compositionally biased stretch (acidic residues) spans 1193 to 1238 (PPEEVYEEGYEEGFEEESEELPEDIDFEPDSFDIENDDLDLEDFDI).

Belongs to the RNA polymerase beta chain family. The RNAP catalytic core consists of 2 alpha, 1 beta, 1 beta' and 1 omega subunit. When a sigma factor is associated with the core the holoenzyme is formed, which can initiate transcription.

It catalyses the reaction RNA(n) + a ribonucleoside 5'-triphosphate = RNA(n+1) + diphosphate. Its function is as follows. DNA-dependent RNA polymerase catalyzes the transcription of DNA into RNA using the four ribonucleoside triphosphates as substrates. In Thermoanaerobacter sp. (strain X514), this protein is DNA-directed RNA polymerase subunit beta.